A 127-amino-acid polypeptide reads, in one-letter code: Small ribosomal subunit protein uS11 (127 aa).

It belongs to the universal ribosomal protein uS11 family. Part of the 30S ribosomal subunit.

In terms of biological role, located on the platform of the 30S subunit. In Picrophilus torridus (strain ATCC 700027 / DSM 9790 / JCM 10055 / NBRC 100828 / KAW 2/3), this protein is Small ribosomal subunit protein uS11.